The sequence spans 468 residues: Microtubule-associated tyrosine carboxypeptidase 1 (468 aa).

Residues 1-10 are compositionally biased toward polar residues; that stretch reads MVLDSGTQVY. Disordered stretches follow at residues 1 to 39 and 77 to 112; these read MVLDSGTQVYEQAPPSPPASSPSQHHKLKPSNRNGPPLY and MKRSESTYSVNSTGRRGRGKAPLGRGCDPGGGTLRP. Residue His-277 coordinates Zn(2+). Glu-278 serves as the catalytic Nucleophile. Positions 282 and 313 each coordinate Zn(2+).

Belongs to the peptidase MATCAP family. Zn(2+) is required as a cofactor.

It localises to the cytoplasm. The protein resides in the cytoskeleton. It carries out the reaction C-terminal L-alpha-aminoacyl-L-glutamyl-L-glutamyl-L-tyrosyl-[tubulin] + H2O = C-terminal L-alpha-aminoacyl-L-glutamyl-L-glutamyl-[tubulin] + L-tyrosine. The catalysed reaction is C-terminal L-alpha-aminoacyl-L-glutamyl-L-glutamyl-L-phenylalanyl-[tubulin] + H2O = C-terminal L-alpha-aminoacyl-L-glutamyl-L-glutamyl-[tubulin] + L-phenylalanine. Tyrosine carboxypeptidase that removes the C-terminal tyrosine residue of alpha-tubulin, thereby regulating microtubule dynamics and function. Also able to remove the C-terminal phenylalanine residue of alpha-tubulin TUBA8. Recognizes adjacent tubulin dimers along the same protofilament. The protein is Microtubule-associated tyrosine carboxypeptidase 1 of Rattus norvegicus (Rat).